A 278-amino-acid polypeptide reads, in one-letter code: Ras-related protein rapC (278 aa).

10–17 lines the GTP pocket; sequence GASGTGKT. Positions 32–40 match the Effector region motif; that stretch reads YDPTIEDLY. Residues 58–62 and 119–122 each bind GTP; these read DTSGT and NKCD. Disordered stretches follow at residues 176 to 209 and 236 to 278; these read NGSS…SSSS and STSS…CLIM. Composition is skewed to low complexity over residues 198–209 and 236–251; these read GSNNSSINSSSS and STSS…SQTN. At Cys275 the chain carries Cysteine methyl ester. Cys275 is lipidated: S-geranylgeranyl cysteine. The propeptide at 276-278 is removed in mature form; the sequence is LIM.

This sequence belongs to the small GTPase superfamily. Ras family.

Its subcellular location is the cell membrane. It catalyses the reaction GTP + H2O = GDP + phosphate + H(+). The protein is Ras-related protein rapC (rapC) of Dictyostelium discoideum (Social amoeba).